The chain runs to 276 residues: Aquaporin-6 (276 aa).

Over 1–22 (MEPGLCNRAYLLVGGLWTAISK) the chain is Cytoplasmic. A helical transmembrane segment spans residues 23–43 (ALFAEFLATGLYVFFGVGSVL). Residues 44-51 (PWPVALPS) lie on the Extracellular side of the membrane. The chain crosses the membrane as a helical span at residues 52-70 (VLQVAITFNLATATAVQIS). The Cytoplasmic portion of the chain corresponds to 71-75 (WKTSG). Residues 76–85 (AHANPAVTLA) constitute an intramembrane region (discontinuously helical). Residues 79-81 (NPA) carry the NPA 1 motif. At 86–96 (YLVGSHISLPR) the chain is on the cytoplasmic side. A helical transmembrane segment spans residues 97–118 (AVAYIAAQLAGATVGAALLYGV). At 119–138 (TPGGVRETLGVNVVHNSTST) the chain is on the extracellular side. A glycan (N-linked (GlcNAc...) asparagine) is linked at Asn134. The chain crosses the membrane as a helical span at residues 139–159 (GQAVAVELVLTLQLVLCVFAS). The Cytoplasmic portion of the chain corresponds to 160–165 (MDSRQT). Residues 166-185 (LGSPAAMIGTSVALGHLIGI) form a helical membrane-spanning segment. Topologically, residues 186–189 (YFTG) are extracellular. Positions 190 to 202 (CSMNPARSFGPAV) form an intramembrane region, discontinuously helical. Positions 193–195 (NPA) match the NPA 2 motif. At 203–210 (IVGKFAVH) the chain is on the extracellular side. The chain crosses the membrane as a helical span at residues 211–231 (WIFWVGPLTGAVLASLIYNFI). Residues 232-276 (LFPDTKTVAQRLAILVGTTKVEKVVDLEPQKKESQTNSEDTEVSV) lie on the Cytoplasmic side of the membrane.

It belongs to the MIP/aquaporin (TC 1.A.8) family. Homotetramer; each monomer provides an independent solute pore. In terms of processing, N-glycosylated. As to expression, kidney.

Its subcellular location is the cytoplasmic vesicle membrane. The catalysed reaction is nitrate(in) = nitrate(out). It carries out the reaction iodide(out) = iodide(in). It catalyses the reaction bromide(in) = bromide(out). The enzyme catalyses chloride(in) = chloride(out). The catalysed reaction is Na(+)(in) = Na(+)(out). It carries out the reaction H2O(in) = H2O(out). It catalyses the reaction CO2(out) = CO2(in). The enzyme catalyses NH4(+)(in) = NH4(+)(out). Activated by mercury and pH-gated, anion permeability is observed at pH 5.5 and increases markedly at pH 4.0. Selectivity for chloride increases at low pH. The water channel activity is stimulated by mercury by opposition to other aquaporins. Functionally, aquaporins form homotetrameric transmembrane channels, with each monomer independently mediating water transport across the plasma membrane along its osmotic gradient. Unlike classical aquaporins, AQP6 is an intracellular channel with selective anion permeability, particularly for nitrate, and exhibits very low water permeability. It may also facilitate the transport of gases, such as CO2 and NH4(+), as demonstrated in vitro. The sequence is that of Aquaporin-6 from Rattus norvegicus (Rat).